A 207-amino-acid chain; its full sequence is Large ribosomal subunit protein uL4 (207 aa).

Residues 50-75 (KTKTVSEVSGTTKKPFKQKGTGNARQ) form a disordered region.

The protein belongs to the universal ribosomal protein uL4 family. In terms of assembly, part of the 50S ribosomal subunit.

One of the primary rRNA binding proteins, this protein initially binds near the 5'-end of the 23S rRNA. It is important during the early stages of 50S assembly. It makes multiple contacts with different domains of the 23S rRNA in the assembled 50S subunit and ribosome. Functionally, forms part of the polypeptide exit tunnel. This is Large ribosomal subunit protein uL4 from Rickettsia akari (strain Hartford).